Here is a 334-residue protein sequence, read N- to C-terminus: Guanine nucleotide-binding protein subunit beta-like protein (334 aa).

6 WD repeats span residues 14-55 (GHKD…DSEF), 65-104 (GHSKRINGLDVSKDGNMMVTVGSDGIGRIWDTESKKSILL), 106-145 (GHGRDVLCVSINSNDTKIVTGSVDRTMNLYNTKGDLVLKM), 152-192 (MHRG…HLQT), 215-256 (DESK…QSFD), and 257-294 (AIVPVRSIAVGETEPVIALGTDESVIIWETISSRVIAS).

The protein belongs to the WD repeat G protein beta family.

The sequence is that of Guanine nucleotide-binding protein subunit beta-like protein from Encephalitozoon cuniculi (strain GB-M1) (Microsporidian parasite).